Consider the following 375-residue polypeptide: Cytochrome P450 monooxygenase ACRTS1 (375 aa).

Cys-321 is a heme binding site.

The protein belongs to the cytochrome P450 family. Heme serves as cofactor.

It functions in the pathway mycotoxin biosynthesis. Its function is as follows. Cytochrome P450 monooxygenase; part of the gene cluster that mediates the biosynthesis of the host-selective toxins (HSTs) ACR-toxins responsible for brown spot of rough lemon disease by the rough lemon pathotype. ACR-toxins cause uncoupling of mitochondrial oxidative-phosphorylation similar to that of classic protonophore. The structure of the major form of ACR-toxin (ACR-toxin I) consists of an alpha-dihydropyrone ring in a 19-carbon polyalcohol, a typical polyketide structure. Minor toxins were characterized as having a pyrone ring with polyalcohol side chains different in length and showing weaker toxicity. The highly reducing polyketide synthase ACRTS2 has all necessary enzymatic domains for multiple cycles of condensation and beta-keto processing. The cytochrome P450 monooxygenase ACRTS1 has also been shown to be essential for ACR-toxin biosynthesis, however its exact role in the pathway has not been elucidated yet. The polypeptide is Cytochrome P450 monooxygenase ACRTS1 (Alternaria alternata (Alternaria rot fungus)).